The chain runs to 258 residues: Snake venom serine proteinase 5 (258 aa).

The signal sequence occupies residues 1–18 (MVLIRVLANLLILQLSYA). Positions 19–24 (QKSSEL) are excised as a propeptide. Residues 25-249 (VVGGDECNIN…YNDWIQSIIA (225 aa)) form the Peptidase S1 domain. 6 cysteine pairs are disulfide-bonded: cysteine 31–cysteine 163, cysteine 50–cysteine 66, cysteine 98–cysteine 256, cysteine 142–cysteine 210, cysteine 174–cysteine 189, and cysteine 200–cysteine 225. Asparagine 44 is a glycosylation site (N-linked (GlcNAc...) asparagine). Active-site charge relay system residues include histidine 65 and aspartate 110. Serine 204 (charge relay system) is an active-site residue.

It belongs to the peptidase S1 family. Snake venom subfamily. As to quaternary structure, monomer. As to expression, expressed by the venom gland.

The protein localises to the secreted. In terms of biological role, snake venom serine protease that may act in the hemostasis system of the prey. This chain is Snake venom serine proteinase 5, found in Crotalus adamanteus (Eastern diamondback rattlesnake).